Consider the following 62-residue polypeptide: Calmodulin regulator protein PCP4 (62 aa).

The tract at residues 1-39 (MSERQGAGATNGKDKTSGENDGQKKVQEEFDIDMDAPET) is disordered. Basic and acidic residues predominate over residues 12–28 (GKDKTSGENDGQKKVQE). Residues 28–40 (EEFDIDMDAPETE) form an acidic; binds calcium and is required for modulating the calcium-binding kinetics of calmodulin region. Residues 39–62 (TERAAVAIQSQFRKFQKKKAGSQS) enclose the IQ domain.

Belongs to the PCP4 family. As to quaternary structure, binds to both calcium-free and calcium-bound calmodulin. The affinity for the calcium-bound form is 50-fold greater.

Functionally, functions as a modulator of calcium-binding by calmodulin. Thereby, regulates calmodulin activity and the different processes it controls. For instance, may play a role in neuronal differentiation through activation of calmodulin-dependent kinase signaling pathways. This chain is Calmodulin regulator protein PCP4, found in Homo sapiens (Human).